The sequence spans 438 residues: Protein c-ets-1-A (438 aa).

The region spanning 49-134 (ATFSRFTKEQ…EHLEILQKDS (86 aa)) is the PNT domain. The interval 128 to 240 (EILQKDSKQY…DNMCLGRISR (113 aa)) is activation domain; required for transcription activation. Positions 301 to 309 (FKDYVRDRA) are helix HI-1. Positions 320–327 (AAALAGYT) are helix HI-2. The ETS DNA-binding region spans 332-412 (IQLWQFLLEL…AGKRYVYRFV (81 aa)). A helix H4 region spans residues 415–419 (LQSLL). The segment at 423-429 (PEELHAM) is helix H5.

It belongs to the ETS family. In terms of assembly, binds DNA as a homodimer; homodimerization is required for transcription activation.

It is found in the nucleus. It localises to the cytoplasm. With respect to regulation, autoinhibited by a module composed of four alpha helices (HI-1, HI-2, H4, and H5) that flank the DNA-binding ETS domain, reducing the affinity for DNA. Transcription factor. Directly controls the expression of cytokine and chemokine genes in a wide variety of different cellular contexts. The sequence is that of Protein c-ets-1-A (ets1-a) from Xenopus laevis (African clawed frog).